We begin with the raw amino-acid sequence, 481 residues long: Tripartite motif-containing protein 10 (481 aa).

The RING-type zinc finger occupies 16–61 (CPICQGTLREPVTIDCGHNFCRACLTRYCEIPGPDLEESPTCPLCK). The segment at 94–135 (GEEDVCQEHGEKIYFFCEDDEMQLCVVCREAGEHATHTMRFL) adopts a B box-type zinc-finger fold. Zn(2+)-binding residues include cysteine 99, histidine 102, cysteine 121, and histidine 127. A coiled-coil region spans residues 142-177 (YREQIHKCLKRLRKEREETQEIQSRENKRMQVLLTQ). Residues 292-481 (REMKMFLEKL…GRGSSFFLSS (190 aa)) form the B30.2/SPRY domain.

The protein belongs to the TRIM/RBCC family. In terms of assembly, interacts with IFNAR1; this interaction prevents association of IFNAR1 with TYK2.

The protein resides in the cytoplasm. Functionally, E3 ligase that plays an essential role in the differentiation and survival of terminal erythroid cells. May directly bind to PTEN and promote its ubiquitination, resulting in its proteasomal degradation and activation of hypertrophic signaling. In addition, plays a role in immune response regulation by repressing the phosphorylation of STAT1 and STAT2 in the interferon/JAK/STAT signaling pathway independent of its E3 ligase activity. Mechanistically, interacts with the intracellular domain of IFNAR1 and thereby inhibits the association of TYK2 and IFNAR1. This Pan troglodytes (Chimpanzee) protein is Tripartite motif-containing protein 10 (TRIM10).